Consider the following 420-residue polypeptide: Gamma-glutamyl phosphate reductase (420 aa).

It belongs to the gamma-glutamyl phosphate reductase family.

It is found in the cytoplasm. It carries out the reaction L-glutamate 5-semialdehyde + phosphate + NADP(+) = L-glutamyl 5-phosphate + NADPH + H(+). Its pathway is amino-acid biosynthesis; L-proline biosynthesis; L-glutamate 5-semialdehyde from L-glutamate: step 2/2. Functionally, catalyzes the NADPH-dependent reduction of L-glutamate 5-phosphate into L-glutamate 5-semialdehyde and phosphate. The product spontaneously undergoes cyclization to form 1-pyrroline-5-carboxylate. The polypeptide is Gamma-glutamyl phosphate reductase (Cereibacter sphaeroides (strain ATCC 17029 / ATH 2.4.9) (Rhodobacter sphaeroides)).